The chain runs to 238 residues: Ribonuclease PH (238 aa).

Residues Arg-86 and 124-126 (GTR) each bind phosphate.

This sequence belongs to the RNase PH family. In terms of assembly, homohexameric ring arranged as a trimer of dimers.

It carries out the reaction tRNA(n+1) + phosphate = tRNA(n) + a ribonucleoside 5'-diphosphate. Phosphorolytic 3'-5' exoribonuclease that plays an important role in tRNA 3'-end maturation. Removes nucleotide residues following the 3'-CCA terminus of tRNAs; can also add nucleotides to the ends of RNA molecules by using nucleoside diphosphates as substrates, but this may not be physiologically important. Probably plays a role in initiation of 16S rRNA degradation (leading to ribosome degradation) during starvation. This chain is Ribonuclease PH, found in Rhizorhabdus wittichii (strain DSM 6014 / CCUG 31198 / JCM 15750 / NBRC 105917 / EY 4224 / RW1) (Sphingomonas wittichii).